Consider the following 274-residue polypeptide: 3-methyl-2-oxobutanoate hydroxymethyltransferase (274 aa).

2 residues coordinate Mg(2+): Asp49 and Asp88. 3-methyl-2-oxobutanoate-binding positions include 49 to 50 (DS), Asp88, and Lys118. Glu120 provides a ligand contact to Mg(2+). Glu187 functions as the Proton acceptor in the catalytic mechanism.

The protein belongs to the PanB family. In terms of assembly, homodecamer; pentamer of dimers. The cofactor is Mg(2+).

The protein localises to the cytoplasm. It catalyses the reaction 3-methyl-2-oxobutanoate + (6R)-5,10-methylene-5,6,7,8-tetrahydrofolate + H2O = 2-dehydropantoate + (6S)-5,6,7,8-tetrahydrofolate. It participates in cofactor biosynthesis; (R)-pantothenate biosynthesis; (R)-pantoate from 3-methyl-2-oxobutanoate: step 1/2. Functionally, catalyzes the reversible reaction in which hydroxymethyl group from 5,10-methylenetetrahydrofolate is transferred onto alpha-ketoisovalerate to form ketopantoate. The sequence is that of 3-methyl-2-oxobutanoate hydroxymethyltransferase from Rhodopseudomonas palustris (strain TIE-1).